A 255-amino-acid polypeptide reads, in one-letter code: uncharacterized protein (255 aa).

This is an uncharacterized protein from Acanthamoeba polyphaga mimivirus (APMV).